A 344-amino-acid polypeptide reads, in one-letter code: L-threonine 3-dehydrogenase (344 aa).

Position 38 (C38) interacts with Zn(2+). Residues T40 and H43 each act as charge relay system in the active site. Zn(2+)-binding residues include H63, E64, C93, C96, C99, and C107. Residues I175, D195, R200, 263 to 265, and 287 to 288 contribute to the NAD(+) site; these read LGI and IY.

It belongs to the zinc-containing alcohol dehydrogenase family. As to quaternary structure, homotetramer. Requires Zn(2+) as cofactor.

The protein localises to the cytoplasm. The enzyme catalyses L-threonine + NAD(+) = (2S)-2-amino-3-oxobutanoate + NADH + H(+). The protein operates within amino-acid degradation; L-threonine degradation via oxydo-reductase pathway; glycine from L-threonine: step 1/2. Functionally, catalyzes the NAD(+)-dependent oxidation of L-threonine to 2-amino-3-ketobutyrate. This is L-threonine 3-dehydrogenase from Deinococcus deserti (strain DSM 17065 / CIP 109153 / LMG 22923 / VCD115).